The primary structure comprises 87 residues: Apolipoprotein C-I (87 aa).

An N-terminal signal peptide occupies residues 1–26 (MRFILSLPVLAVVLAMVLEGPAPAQA).

Belongs to the apolipoprotein C1 family.

Its subcellular location is the secreted. Inhibitor of lipoprotein binding to the low density lipoprotein (LDL) receptor, LDL receptor-related protein, and very low density lipoprotein (VLDL) receptor. Associates with high density lipoproteins (HDL) and the triacylglycerol-rich lipoproteins in the plasma and makes up about 10% of the protein of the VLDL and 2% of that of HDL. Appears to interfere directly with fatty acid uptake and is also the major plasma inhibitor of cholesteryl ester transfer protein (CETP). Binds free fatty acids and reduces their intracellular esterification. Modulates the interaction of APOE with beta-migrating VLDL and inhibits binding of beta-VLDL to the LDL receptor-related protein. The protein is Apolipoprotein C-I (APOC1) of Pteropus alecto (Black flying fox).